The chain runs to 141 residues: Ribonuclease P protein component (141 aa).

Disordered stretches follow at residues 37–56 and 114–141; these read RTEEESNAAKTGDNPRVGFT and RRITAKGERRSGGKRRTERPEPGPVNGK. The span at 114 to 124 shows a compositional bias: basic and acidic residues; the sequence is RRITAKGERRS.

It belongs to the RnpA family. In terms of assembly, consists of a catalytic RNA component (M1 or rnpB) and a protein subunit.

The enzyme catalyses Endonucleolytic cleavage of RNA, removing 5'-extranucleotides from tRNA precursor.. RNaseP catalyzes the removal of the 5'-leader sequence from pre-tRNA to produce the mature 5'-terminus. It can also cleave other RNA substrates such as 4.5S RNA. The protein component plays an auxiliary but essential role in vivo by binding to the 5'-leader sequence and broadening the substrate specificity of the ribozyme. This Brucella melitensis biotype 2 (strain ATCC 23457) protein is Ribonuclease P protein component.